Reading from the N-terminus, the 345-residue chain is Heat-inducible transcription repressor HrcA (345 aa).

The protein belongs to the HrcA family.

Negative regulator of class I heat shock genes (grpE-dnaK-dnaJ and groELS operons). Prevents heat-shock induction of these operons. This chain is Heat-inducible transcription repressor HrcA, found in Corynebacterium diphtheriae (strain ATCC 700971 / NCTC 13129 / Biotype gravis).